Here is a 421-residue protein sequence, read N- to C-terminus: Inhibitor of growth protein 3 (421 aa).

A disordered region spans residues 129-163 (PSQPVNNHHAHSHTPVEKRKYNPTSHHAAADHIPE). Glycyl lysine isopeptide (Lys-Gly) (interchain with G-Cter in SUMO2) cross-links involve residues Lys148, Lys165, and Lys167. Lys181 carries the post-translational modification N6-acetyllysine. A Glycyl lysine isopeptide (Lys-Gly) (interchain with G-Cter in SUMO2) cross-link involves residue Lys256. The residue at position 264 (Lys264) is an N6-acetyllysine. Over residues 286–296 (TQNASSSATDS) the composition is skewed to polar residues. The disordered stretch occupies residues 286–323 (TQNASSSATDSRSGRKSKNNTKSSSQQSSSSSSSSSSS). A compositionally biased stretch (low complexity) spans 308–323 (SSSQQSSSSSSSSSSS). Residues 363–412 (PRYCICNQVSYGEMVGCDNQDCPIEWFHYGCVGLTEAPKGKWFCPQCTAA) form a PHD-type zinc finger. 8 residues coordinate Zn(2+): Cys366, Cys368, Cys379, Cys384, His390, Cys393, Cys406, and Cys409.

This sequence belongs to the ING family. In terms of assembly, interacts with H3K4me3 and to a lesser extent with H3K4me2. Component of the NuA4 histone acetyltransferase complex which contains the catalytic subunit KAT5/TIP60 and the subunits EP400, TRRAP/PAF400, BRD8/SMAP, EPC1, DMAP1/DNMAP1, RUVBL1/TIP49, RUVBL2, ING3, actin, ACTL6A/BAF53A, MORF4L1/MRG15, MORF4L2/MRGX, MRGBP, YEATS4/GAS41, VPS72/YL1 and MEAF6. The NuA4 complex interacts with MYC. HTATTIP/TIP60, EPC1, and ING3 together constitute a minimal HAT complex termed Piccolo NuA4. Component of a SWR1-like complex.

It localises to the nucleus. Functionally, component of the NuA4 histone acetyltransferase (HAT) complex which is involved in transcriptional activation of select genes principally by acetylation of nucleosomal histones H4 and H2A. This modification may both alter nucleosome - DNA interactions and promote interaction of the modified histones with other proteins which positively regulate transcription. This complex may be required for the activation of transcriptional programs associated with oncogene and proto-oncogene mediated growth induction, tumor suppressor mediated growth arrest and replicative senescence, apoptosis, and DNA repair. NuA4 may also play a direct role in DNA repair when directly recruited to sites of DNA damage. Component of a SWR1-like complex that specifically mediates the removal of histone H2A.Z/H2AZ1 from the nucleosome. This chain is Inhibitor of growth protein 3 (Ing3), found in Mus musculus (Mouse).